A 572-amino-acid chain; its full sequence is Urease subunit alpha (572 aa).

The Urease domain occupies 136 to 572; the sequence is GGIDTHIHWI…VPLAQRYFLF (437 aa). Positions 141, 143, and 224 each coordinate Ni(2+). An N6-carboxylysine modification is found at Lys224. His226 lines the substrate pocket. Ni(2+) contacts are provided by His253 and His279. His327 (proton donor) is an active-site residue. Residue Asp367 coordinates Ni(2+).

The protein belongs to the metallo-dependent hydrolases superfamily. Urease alpha subunit family. In terms of assembly, heterotrimer of UreA (gamma), UreB (beta) and UreC (alpha) subunits. Three heterotrimers associate to form the active enzyme. Ni cation is required as a cofactor. Carboxylation allows a single lysine to coordinate two nickel ions.

The protein resides in the cytoplasm. It carries out the reaction urea + 2 H2O + H(+) = hydrogencarbonate + 2 NH4(+). It functions in the pathway nitrogen metabolism; urea degradation; CO(2) and NH(3) from urea (urease route): step 1/1. This is Urease subunit alpha from Actinobacillus pleuropneumoniae serotype 3 (strain JL03).